Consider the following 545-residue polypeptide: Lysine--tRNA ligase (545 aa).

Positions 33–41 (VSGLQHIGR) match the 'HIGH' region motif. The 'KMSKS' region signature appears at 288-292 (DMSSS).

Belongs to the class-I aminoacyl-tRNA synthetase family.

The protein resides in the cytoplasm. The enzyme catalyses tRNA(Lys) + L-lysine + ATP = L-lysyl-tRNA(Lys) + AMP + diphosphate. This is Lysine--tRNA ligase (lysS) from Aeropyrum pernix (strain ATCC 700893 / DSM 11879 / JCM 9820 / NBRC 100138 / K1).